We begin with the raw amino-acid sequence, 365 residues long: 2-aminoethylphosphonate--pyruvate transaminase (365 aa).

Residue Lys194 is modified to N6-(pyridoxal phosphate)lysine.

This sequence belongs to the class-V pyridoxal-phosphate-dependent aminotransferase family. PhnW subfamily. In terms of assembly, homodimer. The cofactor is pyridoxal 5'-phosphate.

The catalysed reaction is (2-aminoethyl)phosphonate + pyruvate = phosphonoacetaldehyde + L-alanine. Involved in phosphonate degradation. This chain is 2-aminoethylphosphonate--pyruvate transaminase, found in Bacillus mycoides (strain KBAB4) (Bacillus weihenstephanensis).